The chain runs to 274 residues: 2,3,4,5-tetrahydropyridine-2,6-dicarboxylate N-succinyltransferase (274 aa).

Substrate-binding residues include Arg104 and Asp141.

It belongs to the transferase hexapeptide repeat family. As to quaternary structure, homotrimer.

It is found in the cytoplasm. It catalyses the reaction (S)-2,3,4,5-tetrahydrodipicolinate + succinyl-CoA + H2O = (S)-2-succinylamino-6-oxoheptanedioate + CoA. The protein operates within amino-acid biosynthesis; L-lysine biosynthesis via DAP pathway; LL-2,6-diaminopimelate from (S)-tetrahydrodipicolinate (succinylase route): step 1/3. The chain is 2,3,4,5-tetrahydropyridine-2,6-dicarboxylate N-succinyltransferase from Edwardsiella ictaluri (strain 93-146).